The chain runs to 156 residues: Small ribosomal subunit protein uS7 (156 aa).

This sequence belongs to the universal ribosomal protein uS7 family. In terms of assembly, part of the 30S ribosomal subunit. Contacts proteins S9 and S11.

Functionally, one of the primary rRNA binding proteins, it binds directly to 16S rRNA where it nucleates assembly of the head domain of the 30S subunit. Is located at the subunit interface close to the decoding center, probably blocks exit of the E-site tRNA. The sequence is that of Small ribosomal subunit protein uS7 from Shouchella clausii (strain KSM-K16) (Alkalihalobacillus clausii).